Reading from the N-terminus, the 257-residue chain is 5-oxoprolinase subunit A (257 aa).

Belongs to the LamB/PxpA family. Forms a complex composed of PxpA, PxpB and PxpC.

It carries out the reaction 5-oxo-L-proline + ATP + 2 H2O = L-glutamate + ADP + phosphate + H(+). Catalyzes the cleavage of 5-oxoproline to form L-glutamate coupled to the hydrolysis of ATP to ADP and inorganic phosphate. This is 5-oxoprolinase subunit A from Fusobacterium nucleatum subsp. nucleatum (strain ATCC 25586 / DSM 15643 / BCRC 10681 / CIP 101130 / JCM 8532 / KCTC 2640 / LMG 13131 / VPI 4355).